Reading from the N-terminus, the 196-residue chain is Holliday junction branch migration complex subunit RuvA (196 aa).

A domain I region spans residues 1–63; the sequence is MINKIYGKIV…DDDVKLFGFL (63 aa). Positions 64-142 are domain II; the sequence is NISEREVFEN…KGDESSSYML (79 aa). A region of interest (flexible linker) is located at residue Lys-143. The segment at 143-196 is domain III; that stretch reads KFKELEQSIVNMGFDRKLVVVAFREIMLSDKFLILKEAEQEQFLFTETLKRLSV.

The protein belongs to the RuvA family. In terms of assembly, homotetramer. Forms an RuvA(8)-RuvB(12)-Holliday junction (HJ) complex. HJ DNA is sandwiched between 2 RuvA tetramers; dsDNA enters through RuvA and exits via RuvB. An RuvB hexamer assembles on each DNA strand where it exits the tetramer. Each RuvB hexamer is contacted by two RuvA subunits (via domain III) on 2 adjacent RuvB subunits; this complex drives branch migration. In the full resolvosome a probable DNA-RuvA(4)-RuvB(12)-RuvC(2) complex forms which resolves the HJ.

The protein resides in the cytoplasm. Its function is as follows. The RuvA-RuvB-RuvC complex processes Holliday junction (HJ) DNA during genetic recombination and DNA repair, while the RuvA-RuvB complex plays an important role in the rescue of blocked DNA replication forks via replication fork reversal (RFR). RuvA specifically binds to HJ cruciform DNA, conferring on it an open structure. The RuvB hexamer acts as an ATP-dependent pump, pulling dsDNA into and through the RuvAB complex. HJ branch migration allows RuvC to scan DNA until it finds its consensus sequence, where it cleaves and resolves the cruciform DNA. This chain is Holliday junction branch migration complex subunit RuvA, found in Borrelia recurrentis (strain A1).